A 374-amino-acid chain; its full sequence is Tuliposide A-converting enzyme b1, amyloplastic (374 aa).

The transit peptide at 1–68 (MSVALFCGPP…TNSSLSPSPT (68 aa)) directs the protein to the amyloplast. Catalysis depends on S226, which acts as the Acyl-ester intermediate. Catalysis depends on charge relay system residues D316 and H348.

Belongs to the AB hydrolase superfamily. In terms of assembly, homodimer. As to expression, highly expressed in pistil and bulb scales. Lower expression in stem, and barely detected in root, leaf, petal and stamen.

It is found in the plastid. The protein resides in the amyloplast. It catalyses the reaction 6-tuliposide A = tulipalin A + D-glucose. Functionally, lactone-forming carboxylesterases, specifically catalyzing intramolecular transesterification, but not hydrolysis. Involved in the biosynthesis of tulipalins, defensive chemicals that show antimicrobial activities against a broad range of strains of bacteria and fungi. Substrates are 6-tuliposide A &gt; 6-tuliposide B. The polypeptide is Tuliposide A-converting enzyme b1, amyloplastic (TCEA-B1) (Tulipa gesneriana (Garden tulip)).